Reading from the N-terminus, the 422-residue chain is Protein MANNAN SYNTHESIS-RELATED 1 (422 aa).

Residues 1 to 6 (MGVDLR) lie on the Cytoplasmic side of the membrane. Residues 7-26 (QVVAGILTITMFVMLGQMLH) form a helical; Signal-anchor for type II membrane protein membrane-spanning segment. Over 27 to 422 (RDYFDSLQEK…KNHLAYSCFC (396 aa)) the chain is Lumenal. Substrate is bound at residue 263-265 (DLR).

It belongs to the glycosyltransferase GT106 family. As to expression, widely expressed.

The protein localises to the golgi apparatus membrane. It functions in the pathway glycan biosynthesis. Its function is as follows. Glycosyltransferase involved in mannan biosynthesis. The polypeptide is Protein MANNAN SYNTHESIS-RELATED 1 (Arabidopsis thaliana (Mouse-ear cress)).